The sequence spans 291 residues: uncharacterized protein (291 aa).

The region spanning 5-196 (GVFSGGGVKG…LSNFPIWLFS (192 aa)) is the PNPLA domain. A GXGXXG motif is present at residues 9–14 (GGGVKG). A helical membrane pass occupies residues 34–50 (VAGTSAGAIIAAFIASG). The GXSXG motif lies at 36 to 40 (GTSAG). Catalysis depends on Ser38, which acts as the Nucleophile. The active-site Proton acceptor is Asp183. A DGA/G motif is present at residues 183–185 (DGG).

Its subcellular location is the cell membrane. Its function is as follows. Probable lipid hydrolase. This is an uncharacterized protein from Bacillus subtilis (strain 168).